The following is a 273-amino-acid chain: 2,3,4,5-tetrahydropyridine-2,6-dicarboxylate N-succinyltransferase (273 aa).

Substrate contacts are provided by R104 and D141.

Belongs to the transferase hexapeptide repeat family. As to quaternary structure, homotrimer.

The protein resides in the cytoplasm. It catalyses the reaction (S)-2,3,4,5-tetrahydrodipicolinate + succinyl-CoA + H2O = (S)-2-succinylamino-6-oxoheptanedioate + CoA. Its pathway is amino-acid biosynthesis; L-lysine biosynthesis via DAP pathway; LL-2,6-diaminopimelate from (S)-tetrahydrodipicolinate (succinylase route): step 1/3. The protein is 2,3,4,5-tetrahydropyridine-2,6-dicarboxylate N-succinyltransferase of Chromobacterium violaceum (strain ATCC 12472 / DSM 30191 / JCM 1249 / CCUG 213 / NBRC 12614 / NCIMB 9131 / NCTC 9757 / MK).